Reading from the N-terminus, the 46-residue chain is Diuretic hormone (46 aa).

Residue I46 is modified to Isoleucine amide.

This sequence belongs to the sauvagine/corticotropin-releasing factor/urotensin I family.

It localises to the secreted. Regulation of fluid secretion. Stimulates primary urine secretion by Malpighian tubules and causes a dose-dependent stimulation of cAMP levels in the tubules. The protein is Diuretic hormone of Locusta migratoria (Migratory locust).